A 399-amino-acid chain; its full sequence is L-asparaginase-like protein GG20738 (399 aa).

Positions 1 to 22 are cleaved as a signal peptide; it reads MLAQSCCLRLLILLLLCKSTCS. 3 disulfide bridges follow: C90-C95, C189-C205, and C344-C371.

It belongs to the Ntn-hydrolase family.

The protein is L-asparaginase-like protein GG20738 of Drosophila erecta (Fruit fly).